The primary structure comprises 415 residues: Heterogeneous nuclear ribonucleoprotein F (415 aa).

Methionine 1 is subject to N-acetylmethionine. Position 2 is an N-acetylmethionine; in Heterogeneous nuclear ribonucleoprotein F, N-terminally processed (methionine 2). The RRM 1 domain maps to 13 to 85 (VKLRGLPWSC…ESMGHRYIEV (73 aa)). Residue lysine 72 forms a Glycyl lysine isopeptide (Lys-Gly) (interchain with G-Cter in SUMO) linkage. Positions 81 to 86 (RYIEVF) are interaction with RNA. Lysine 87 is covalently cross-linked (Glycyl lysine isopeptide (Lys-Gly) (interchain with G-Cter in SUMO2)). Residues serine 104, serine 107, and serine 161 each carry the phosphoserine modification. The 78-residue stretch at 111-188 (GFVRLRGLPF…RYIEVFKSSQ (78 aa)) folds into the RRM 2 domain. Lysine 167 participates in a covalent cross-link: Glycyl lysine isopeptide (Lys-Gly) (interchain with G-Cter in SUMO2). Positions 179-184 (RYIEVF) are interaction with RNA. Residue lysine 185 forms a Glycyl lysine isopeptide (Lys-Gly) (interchain with G-Cter in SUMO2) linkage. A phosphoserine mark is found at serine 187, serine 193, and serine 195. An N6-acetyllysine; alternate modification is found at lysine 200. Lysine 200 participates in a covalent cross-link: Glycyl lysine isopeptide (Lys-Gly) (interchain with G-Cter in SUMO2); alternate. Threonine 215 bears the Phosphothreonine mark. Lysine 224 bears the N6-acetyllysine; alternate mark. Lysine 224 participates in a covalent cross-link: Glycyl lysine isopeptide (Lys-Gly) (interchain with G-Cter in SUMO2); alternate. Serine 265 carries the phosphoserine modification. In terms of domain architecture, RRM 3 spans 289 to 366 (HCVHMRGLPY…IELFLNSTTG (78 aa)). Residues 355–360 (RYIELF) form an interaction with RNA region.

Identified in the spliceosome C complex. Interacts with AGO1, AGO2, TBP and TXNL4/DIM1. Post-translationally, sumoylated.

It is found in the nucleus. The protein localises to the nucleoplasm. Component of the heterogeneous nuclear ribonucleoprotein (hnRNP) complexes which provide the substrate for the processing events that pre-mRNAs undergo before becoming functional, translatable mRNAs in the cytoplasm. Plays a role in the regulation of alternative splicing events. Binds G-rich sequences in pre-mRNAs and keeps target RNA in an unfolded state. The sequence is that of Heterogeneous nuclear ribonucleoprotein F (HNRNPF) from Macaca fascicularis (Crab-eating macaque).